Consider the following 111-residue polypeptide: MFKATARYIRVQPRKARLAAGLMRNLSVQEAEEQLGFSQLKAGRCLKKVLNSAVANAELHENIKRENLSVTEVRVDAGPVYKRSKSKSRGGRSPILKRTSHLTVIVGEKER.

Belongs to the universal ribosomal protein uL22 family. As to quaternary structure, part of the 50S ribosomal subunit.

Its function is as follows. This protein binds specifically to 23S rRNA; its binding is stimulated by other ribosomal proteins, e.g. L4, L17, and L20. It is important during the early stages of 50S assembly. It makes multiple contacts with different domains of the 23S rRNA in the assembled 50S subunit and ribosome. In terms of biological role, the globular domain of the protein is located near the polypeptide exit tunnel on the outside of the subunit, while an extended beta-hairpin is found that lines the wall of the exit tunnel in the center of the 70S ribosome. The chain is Large ribosomal subunit protein uL22 from Chlamydia pneumoniae (Chlamydophila pneumoniae).